The primary structure comprises 2139 residues: U5 small nuclear ribonucleoprotein 200 kDa helicase (2139 aa).

Residues S17 and S26 each carry the phosphoserine modification. Residues 39–80 (EVLSLVGKLEGTRMGDKAQRTKPQMQEERRAKRRKRDEDRHD) are disordered. K46 is covalently cross-linked (Glycyl lysine isopeptide (Lys-Gly) (interchain with G-Cter in SUMO2)). A compositionally biased stretch (basic and acidic residues) spans 48-80 (EGTRMGDKAQRTKPQMQEERRAKRRKRDEDRHD). A coiled-coil region spans residues 54 to 84 (DKAQRTKPQMQEERRAKRRKRDEDRHDINKM). At S225 the chain carries Phosphoserine. T389 carries the phosphothreonine modification. The tract at residues 395–2132 (DLDQGGEALA…YKFSVDVKEA (1738 aa)) is interaction with C9orf78 and WBP4. One can recognise a Helicase ATP-binding 1 domain in the interval 490-673 (RAALETDENL…FLRVDPAKGL (184 aa)). Residue 503 to 510 (APTGAGKT) coordinates ATP. The DEAH box signature appears at 615–618 (DEIH). The Helicase C-terminal 1 domain occupies 684-921 (PLEQTYVGIT…NAKDAVNWLG (238 aa)). Y709 is modified (phosphotyrosine). Residue K944 forms a Glycyl lysine isopeptide (Lys-Gly) (interchain with G-Cter in SUMO) linkage. Position 971 is an N6-acetyllysine; alternate (K971). A Glycyl lysine isopeptide (Lys-Gly) (interchain with G-Cter in SUMO); alternate cross-link involves residue K971. One can recognise an SEC63 1 domain in the interval 982–1289 (TELGRIASHY…SCETQLPVSF (308 aa)). Glycyl lysine isopeptide (Lys-Gly) (interchain with G-Cter in SUMO) cross-links involve residues K1071 and K1199. The tract at residues 1285–2139 (LPVSFRHLIL…KEAETDSDSD (855 aa)) is interaction with TSSC4. Residues 1340-1515 (NTVYNSDDNV…WLGCSATSTF (176 aa)) enclose the Helicase ATP-binding 2 domain. Residue 1353–1360 (APTGSGKT) participates in ATP binding. A Phosphothreonine modification is found at T1431. The DEAH box motif lies at 1457-1460 (DEVH). Residues 1548 to 1756 (PVYHAITKHS…TIENKQDAVD (209 aa)) enclose the Helicase C-terminal 2 domain. Position 1768 is a phosphothreonine (T1768). The 313-residue stretch at 1815–2127 (PLNLGMIAAY…GCDQEYKFSV (313 aa)) folds into the SEC63 2 domain. Phosphoserine is present on S2005. Residue K2094 forms a Glycyl lysine isopeptide (Lys-Gly) (interchain with G-Cter in SUMO) linkage. T2134 bears the Phosphothreonine mark. Phosphoserine is present on residues S2136 and S2138.

The protein belongs to the helicase family. SKI2 subfamily. In terms of assembly, component of a core complex containing at least PRPF8, SNRNP200, EFTUD2 and SNRNP40. Component of the U5 snRNP and U4/U6-U5 tri-snRNP complexes, building blocks of the spliceosome. Component of the U4/U6-U5 tri-snRNP complex composed of the U4, U6 and U5 snRNAs and at least PRPF3, PRPF4, PRPF6, PRPF8, PRPF31, SNRNP200, TXNL4A, SNRNP40, DDX23, CD2BP2, PPIH, SNU13, EFTUD2, SART1 and USP39. Component of precatalytic, catalytic and postcatalytic spliceosomal complexes. Component of the minor spliceosome, which splices U12-type introns. Interacts with C9orf78; the interaction is direct and mutually exclusive with its interaction with WBP4. Interacts with WBP4; the interaction is mutually exclusive with its interaction with C9orf78. Interacts with PRPF8. Interacts with TSSC4; the interaction is direct, excludes recruitment of C9ORF78 and WBP4 to SNRNP200 and negatively regulates its RNA helicase activity.

It is found in the nucleus. The catalysed reaction is ATP + H2O = ADP + phosphate + H(+). Functionally, catalyzes the ATP-dependent unwinding of U4/U6 RNA duplices, an essential step in the assembly of a catalytically active spliceosome. Plays a role in pre-mRNA splicing as core component of precatalytic, catalytic and postcatalytic spliceosomal complexes. As a component of the minor spliceosome, involved in the splicing of U12-type introns in pre-mRNAs. Involved in spliceosome assembly, activation and disassembly. Mediates changes in the dynamic network of RNA-RNA interactions in the spliceosome. In Rattus norvegicus (Rat), this protein is U5 small nuclear ribonucleoprotein 200 kDa helicase (Snrnp200).